We begin with the raw amino-acid sequence, 784 residues long: E3 ubiquitin-protein ligase RNF43 (784 aa).

The N-terminal stretch at 1-23 (MSGGHQLQLAVLWPWLLMATLHA) is a signal peptide. Over 24–197 (GFGHTGRVLA…LKEPPAGANY (174 aa)) the chain is Extracellular. N-linked (GlcNAc...) asparagine glycans are attached at residues N62 and N92. An intrachain disulfide couples C91 to C119. A helical transmembrane segment spans residues 198–218 (DVWILLTVVGTVFVIILASVL). Over 219–784 (RIRCRPHHSR…ELEELCEQAV (566 aa)) the chain is Cytoplasmic. Residues 272-313 (CAICLEEFSEGQELRVISCLHEFHRTCVDPWLYQHRTCPLCM) form an RING-type; atypical zinc finger. Disordered stretches follow at residues 364–407 (TSVA…HLAV), 459–478 (ADGPASDSSSGPCHGSSSDS), and 516–671 (DLQG…SLPP). Positions 386–395 (RHQRLPRTSH) are enriched in basic residues. Residues 464-478 (SDSSSGPCHGSSSDS) are compositionally biased toward low complexity. Over residues 548–568 (IHYHRHRHHHYKRQFQWHGRK) the composition is skewed to basic residues. The segment covering 583–608 (SHTQLEPSLPDQQLITPNPTASSMLP) has biased composition (polar residues). Over residues 618-629 (EPAPGLAEASSP) the composition is skewed to low complexity.

The protein belongs to the ZNRF3 family. In terms of assembly, interacts with AKAP8L, NONO and SFPQ. Interacts with FZD5. Identified in a complex composed of RNF43, LGR5 and RSPO1. Interacts with RSPO2. Interacts with LMBR1L. Autoubiquitinated. As to expression, expressed in crypt base columnar cells of small intestinal epithelium. Crypt base columnar cells are small cycling cells residing between the terminally differentiated Paneth cells at crypt bottoms. Colocalizes with Lgr5-positive stem cells.

The protein resides in the cell membrane. Its subcellular location is the endoplasmic reticulum membrane. It localises to the nucleus envelope. It carries out the reaction S-ubiquitinyl-[E2 ubiquitin-conjugating enzyme]-L-cysteine + [acceptor protein]-L-lysine = [E2 ubiquitin-conjugating enzyme]-L-cysteine + N(6)-ubiquitinyl-[acceptor protein]-L-lysine.. Its pathway is protein modification; protein ubiquitination. E3 ubiquitin-protein ligase that acts as a negative regulator of the Wnt signaling pathway by mediating the ubiquitination, endocytosis and subsequent degradation of Wnt receptor complex components Frizzled. Acts on both canonical and non-canonical Wnt signaling pathway. Along with RSPO2 and ZNRF3, constitutes a master switch that governs limb specification. The protein is E3 ubiquitin-protein ligase RNF43 (Rnf43) of Mus musculus (Mouse).